A 308-amino-acid chain; its full sequence is Taste receptor type 2 member 107 (308 aa).

Topologically, residues 1–7 (MLNSAEG) are extracellular. The chain crosses the membrane as a helical span at residues 8–28 (ILLCVVTSEAVLGVLGDTYIA). Topologically, residues 29 to 43 (LFNCMDYAKNKKLSK) are cytoplasmic. Residues 44 to 64 (IGFILIGLAISRIGVVWIIIL) traverse the membrane as a helical segment. Over 65–87 (QGYIQVFFPHMLTSGNITEYITY) the chain is Extracellular. An N-linked (GlcNAc...) asparagine glycan is attached at Asn-80. The helical transmembrane segment at 88-108 (IWVFLNHLSVWFVTNLNILYF) threads the bilayer. At 109-125 (LKIANFSNSVFLWLKRR) the chain is on the cytoplasmic side. Residues 126 to 146 (VNAVFIFLSGCLLTSWLLCFP) form a helical membrane-spanning segment. The Extracellular segment spans residues 147–180 (QMTKILQNSKMHQRNTSWVHQRKNYFLINQSVTN). N-linked (GlcNAc...) asparagine glycans are attached at residues Asn-161 and Asn-175. Residues 181-201 (LGIFFFIIVSLITCFLLIVFL) form a helical membrane-spanning segment. Over 202–232 (WRHVRQMHSDVSGFRDHSTKVHVKAMKFLIS) the chain is Cytoplasmic. A helical membrane pass occupies residues 233–253 (FMVFFILHFVGLSIEVLCFIL). At 254-258 (PQNKL) the chain is on the extracellular side. A helical membrane pass occupies residues 259–279 (LFITGLTATCLYPCGHSIIVI). The Cytoplasmic segment spans residues 280–308 (LGNKQLKQASLKALQQLKCCETKGNFRVK).

This sequence belongs to the G-protein coupled receptor T2R family.

Its subcellular location is the membrane. Putative taste receptor which may play a role in the perception of bitterness. The chain is Taste receptor type 2 member 107 from Mus musculus (Mouse).